The chain runs to 230 residues: Phosphoribosylformylglycinamidine synthase subunit PurQ (230 aa).

A Glutamine amidotransferase type-1 domain is found at 2–226 (RVAVIVFPGS…LKTWREQNSV (225 aa)). Cys86 acts as the Nucleophile in catalysis. Catalysis depends on residues His195 and Glu197.

In terms of assembly, part of the FGAM synthase complex composed of 1 PurL, 1 PurQ and 2 PurS subunits.

It is found in the cytoplasm. It catalyses the reaction N(2)-formyl-N(1)-(5-phospho-beta-D-ribosyl)glycinamide + L-glutamine + ATP + H2O = 2-formamido-N(1)-(5-O-phospho-beta-D-ribosyl)acetamidine + L-glutamate + ADP + phosphate + H(+). The enzyme catalyses L-glutamine + H2O = L-glutamate + NH4(+). The protein operates within purine metabolism; IMP biosynthesis via de novo pathway; 5-amino-1-(5-phospho-D-ribosyl)imidazole from N(2)-formyl-N(1)-(5-phospho-D-ribosyl)glycinamide: step 1/2. Functionally, part of the phosphoribosylformylglycinamidine synthase complex involved in the purines biosynthetic pathway. Catalyzes the ATP-dependent conversion of formylglycinamide ribonucleotide (FGAR) and glutamine to yield formylglycinamidine ribonucleotide (FGAM) and glutamate. The FGAM synthase complex is composed of three subunits. PurQ produces an ammonia molecule by converting glutamine to glutamate. PurL transfers the ammonia molecule to FGAR to form FGAM in an ATP-dependent manner. PurS interacts with PurQ and PurL and is thought to assist in the transfer of the ammonia molecule from PurQ to PurL. The sequence is that of Phosphoribosylformylglycinamidine synthase subunit PurQ from Brevibacillus brevis (strain 47 / JCM 6285 / NBRC 100599).